Consider the following 303-residue polypeptide: Signal recognition particle receptor FtsY (303 aa).

GTP contacts are provided by residues 108–115, 190–194, and 254–257; these read GVNGVGKT, DTAGR, and TKLD.

It belongs to the GTP-binding SRP family. FtsY subfamily. Part of the signal recognition particle protein translocation system, which is composed of SRP and FtsY. SRP is a ribonucleoprotein composed of Ffh and a 4.5S RNA molecule.

Its subcellular location is the cell inner membrane. The protein localises to the cytoplasm. The catalysed reaction is GTP + H2O = GDP + phosphate + H(+). Involved in targeting and insertion of nascent membrane proteins into the cytoplasmic membrane. Acts as a receptor for the complex formed by the signal recognition particle (SRP) and the ribosome-nascent chain (RNC). Interaction with SRP-RNC leads to the transfer of the RNC complex to the Sec translocase for insertion into the membrane, the hydrolysis of GTP by both Ffh and FtsY, and the dissociation of the SRP-FtsY complex into the individual components. This chain is Signal recognition particle receptor FtsY, found in Rickettsia prowazekii (strain Madrid E).